Here is a 507-residue protein sequence, read N- to C-terminus: Sugar transport protein 8 (507 aa).

Over 1–21 (MAVVISSNGNSKSFDAKMTVY) the chain is Cytoplasmic. Helical transmembrane passes span 22–42 (VFIC…DIGI), 79–99 (FLQL…FFAS), 116–136 (IFFL…MLII), 139–159 (ILLG…LSEI), 166–186 (GGLN…ANIV), 200–220 (IALG…LLIC), 281–301 (FVIG…AIMF), 319–339 (LSAV…IFLV), 346–366 (FLLL…GIIL), 382–402 (LVVV…WGPL), 419–439 (GFAL…QAFL), and 448–468 (GIFF…LFFV). Residues 469-507 (PETKGVSIDDMRDSVWKLHWYWKRFMLEEDEHDVEKRTD) are Cytoplasmic-facing.

It belongs to the major facilitator superfamily. Sugar transporter (TC 2.A.1.1) family.

The protein resides in the membrane. Mediates an active uptake of hexoses, probably by sugar/hydrogen symport. This is Sugar transport protein 8 (STP8) from Arabidopsis thaliana (Mouse-ear cress).